A 184-amino-acid polypeptide reads, in one-letter code: ATP synthase subunit delta (184 aa).

The protein belongs to the ATPase delta chain family. In terms of assembly, F-type ATPases have 2 components, F(1) - the catalytic core - and F(0) - the membrane proton channel. F(1) has five subunits: alpha(3), beta(3), gamma(1), delta(1), epsilon(1). F(0) has three main subunits: a(1), b(2) and c(10-14). The alpha and beta chains form an alternating ring which encloses part of the gamma chain. F(1) is attached to F(0) by a central stalk formed by the gamma and epsilon chains, while a peripheral stalk is formed by the delta and b chains.

It is found in the cell membrane. F(1)F(0) ATP synthase produces ATP from ADP in the presence of a proton or sodium gradient. F-type ATPases consist of two structural domains, F(1) containing the extramembraneous catalytic core and F(0) containing the membrane proton channel, linked together by a central stalk and a peripheral stalk. During catalysis, ATP synthesis in the catalytic domain of F(1) is coupled via a rotary mechanism of the central stalk subunits to proton translocation. Functionally, this protein is part of the stalk that links CF(0) to CF(1). It either transmits conformational changes from CF(0) to CF(1) or is implicated in proton conduction. The protein is ATP synthase subunit delta of Christiangramia forsetii (strain DSM 17595 / CGMCC 1.15422 / KT0803) (Gramella forsetii).